Reading from the N-terminus, the 342-residue chain is Probable dual-specificity RNA methyltransferase RlmN (342 aa).

Glu91 (proton acceptor) is an active-site residue. Positions Tyr97 to Asp326 constitute a Radical SAM core domain. Cys104 and Cys331 are disulfide-bonded. Positions 111, 115, and 118 each coordinate [4Fe-4S] cluster. Residues Gly157–Glu158, Ser189, Ser212–His214, and Asn288 contribute to the S-adenosyl-L-methionine site. Cys331 serves as the catalytic S-methylcysteine intermediate.

This sequence belongs to the radical SAM superfamily. RlmN family. It depends on [4Fe-4S] cluster as a cofactor.

It is found in the cytoplasm. It carries out the reaction adenosine(2503) in 23S rRNA + 2 reduced [2Fe-2S]-[ferredoxin] + 2 S-adenosyl-L-methionine = 2-methyladenosine(2503) in 23S rRNA + 5'-deoxyadenosine + L-methionine + 2 oxidized [2Fe-2S]-[ferredoxin] + S-adenosyl-L-homocysteine. The catalysed reaction is adenosine(37) in tRNA + 2 reduced [2Fe-2S]-[ferredoxin] + 2 S-adenosyl-L-methionine = 2-methyladenosine(37) in tRNA + 5'-deoxyadenosine + L-methionine + 2 oxidized [2Fe-2S]-[ferredoxin] + S-adenosyl-L-homocysteine. Specifically methylates position 2 of adenine 2503 in 23S rRNA and position 2 of adenine 37 in tRNAs. In Caldanaerobacter subterraneus subsp. tengcongensis (strain DSM 15242 / JCM 11007 / NBRC 100824 / MB4) (Thermoanaerobacter tengcongensis), this protein is Probable dual-specificity RNA methyltransferase RlmN.